The sequence spans 225 residues: Pyrimidine 5'-nucleotidase YjjG (225 aa).

Asp-9 serves as the catalytic Nucleophile.

It belongs to the HAD-like hydrolase superfamily. YjjG family. In terms of assembly, monomer, homodimer and possibly homotetramer in solution. Requires Mn(2+) as cofactor. The cofactor is Mg(2+). It depends on Co(2+) as a cofactor.

Its subcellular location is the cytoplasm. It catalyses the reaction a ribonucleoside 5'-phosphate + H2O = a ribonucleoside + phosphate. It carries out the reaction a 2'-deoxyribonucleoside 5'-phosphate + H2O = a 2'-deoxyribonucleoside + phosphate. The catalysed reaction is UMP + H2O = uridine + phosphate. The enzyme catalyses dUMP + H2O = 2'-deoxyuridine + phosphate. It catalyses the reaction dTMP + H2O = thymidine + phosphate. In contrast to nucleotidases from other families, is not inhibited by ribo- and deoxyribonucleoside di- and triphosphates. Nucleotidase that shows high phosphatase activity toward non-canonical pyrimidine nucleotides and three canonical nucleoside 5'-monophosphates (UMP, dUMP, and dTMP), and very low activity against TDP, IMP, UDP, GMP, dGMP, AMP, dAMP, and 6-phosphogluconate. Appears to function as a house-cleaning nucleotidase in vivo, since the general nucleotidase activity of YjjG allows it to protect cells against non-canonical pyrimidine derivatives such as 5-fluoro-2'-deoxyuridine, 5-fluorouridine, 5-fluoroorotate, 5-fluorouracil, and 5-aza-2'-deoxycytidine, and prevents the incorporation of potentially mutagenic nucleotides into DNA. Its dUMP phosphatase activity that catalyzes the hydrolysis of dUMP to deoxyuridine is necessary for thymine utilization via the thymine salvage pathway. Is strictly specific to substrates with 5'-phosphates and shows no activity against nucleoside 2'- or 3'-monophosphates. The protein is Pyrimidine 5'-nucleotidase YjjG (yjjG) of Escherichia coli (strain K12).